Reading from the N-terminus, the 413-residue chain is MEKHSGFVRFITRGSLVGQILVGLVLGIALASFSQSGAIAAGLLGTLFVSALKAVAPVLVFILVAASIANHRQGQKTNMRPIVLLYLLGTFAAALVAVVVSFAFPSQLALVSHTNDITPPGGIVEVLQSLLMNVVDNPFHALASGNFIGILAWAIGLGVALRHASDTTKRVVGDLSYGVTFIVRVVIRFAPLGIFGLVSSTLAETGFDALWGYAHLLMVLIGAMLLVALVLNPLIVFWKIRRNPYPLVFTCLRESGLTAFFTRSSAANIPVNMELCKKLGLNEDTYAVSIPLGATINMAGAAITITVLTLAAAHTLEISVDLPTALLLSLVAAVCACGASGVAGGSLLLIPLACSLFGISSDIAMQVVAVGFIIGVLQDSCETALNSSTDVLFTATACVAAEESTGDSAAELG.

The next 9 membrane-spanning stretches (helical) occupy residues 14 to 34 (GSLV…ASFS), 44 to 64 (LGTL…FILV), 82 to 102 (IVLL…VVSF), 141 to 161 (ALAS…GVAL), 178 to 198 (GVTF…FGLV), 217 to 237 (LMVL…LIVF), 290 to 310 (IPLG…VLTL), 330 to 350 (LVAA…LLLI), and 356 to 376 (LFGI…IIGV).

It belongs to the dicarboxylate/amino acid:cation symporter (DAACS) (TC 2.A.23) family.

It localises to the cell inner membrane. It catalyses the reaction L-serine(in) + Na(+)(in) = L-serine(out) + Na(+)(out). The enzyme catalyses L-threonine(in) + Na(+)(in) = L-threonine(out) + Na(+)(out). Functionally, involved in the import of serine and threonine into the cell, with the concomitant import of sodium (symport system). The polypeptide is Serine/threonine transporter SstT (Edwardsiella ictaluri (strain 93-146)).